The primary structure comprises 501 residues: Cytochrome P450 90A3 (501 aa).

Residues 2 to 22 traverse the membrane as a helical segment; it reads AAAALLLLAAAAAIVVVAMVL. Heme is bound at residue cysteine 446.

The protein belongs to the cytochrome P450 family. The cofactor is heme. Highly expressed in shoot apex and inflorenscence. Expressed in roots, stems, leaf blades and leaf sheaths.

Its subcellular location is the membrane. It functions in the pathway plant hormone biosynthesis; brassinosteroid biosynthesis. In terms of biological role, catalyzes the C23-alpha-hydroxylation step in brassinosteroid biosynthesis. Converts 6-deoxocathasterone (6-deoxoCT) to 6-deoxoteasterone (6-deoxoTE) in the late C6-oxidation pathway and cathasterone (CT) to teasterone (TE) in the early C6-oxidation pathway of brassinolide (BL) biosynthesis. This chain is Cytochrome P450 90A3, found in Oryza sativa subsp. japonica (Rice).